The sequence spans 338 residues: DNA-directed RNA polymerase subunit alpha (338 aa).

Positions 1 to 225 (MLISQRPTIT…ELFGLARELN (225 aa)) are alpha N-terminal domain (alpha-NTD). The interval 242-338 (YIAAYSMPIE…YIDVEAEDSE (97 aa)) is alpha C-terminal domain (alpha-CTD). The interval 319 to 338 (LEGYDAETGGYIDVEAEDSE) is disordered.

Belongs to the RNA polymerase alpha chain family. As to quaternary structure, homodimer. The RNAP catalytic core consists of 2 alpha, 1 beta, 1 beta' and 1 omega subunit. When a sigma factor is associated with the core the holoenzyme is formed, which can initiate transcription.

The enzyme catalyses RNA(n) + a ribonucleoside 5'-triphosphate = RNA(n+1) + diphosphate. In terms of biological role, DNA-dependent RNA polymerase catalyzes the transcription of DNA into RNA using the four ribonucleoside triphosphates as substrates. The sequence is that of DNA-directed RNA polymerase subunit alpha from Corynebacterium glutamicum (strain ATCC 13032 / DSM 20300 / JCM 1318 / BCRC 11384 / CCUG 27702 / LMG 3730 / NBRC 12168 / NCIMB 10025 / NRRL B-2784 / 534).